Consider the following 213-residue polypeptide: Ergothioneine transport ATP-binding protein EgtV (213 aa).

One can recognise an ABC transporter domain in the interval 5 to 212 (VTIENVSFNY…ATKTLEIKAL (208 aa)). Residue 37–44 (GESGSGKS) participates in ATP binding.

Belongs to the ABC transporter superfamily. As to quaternary structure, the complex is composed of two ATP-binding proteins (EgtV) and two transmembrane proteins (EgtU).

It localises to the cell inner membrane. It catalyses the reaction ergothioneine(out) + ATP + H2O = ergothioneine(in) + ADP + phosphate + H(+). Its function is as follows. Part of the ABC transporter complex EgtUV involved in the uptake of ergothioneine (EGT), a natural low-molecular weight (LMW) thiol antioxidant which protects H.pylori against bleach stress. Responsible for energy coupling to the transport system. The chain is Ergothioneine transport ATP-binding protein EgtV from Helicobacter pylori (strain G27).